We begin with the raw amino-acid sequence, 87 residues long: Large ribosomal subunit protein bL31B (87 aa).

The protein belongs to the bacterial ribosomal protein bL31 family. Type B subfamily. In terms of assembly, part of the 50S ribosomal subunit.

The sequence is that of Large ribosomal subunit protein bL31B from Salinispora arenicola (strain CNS-205).